The primary structure comprises 207 residues: Holliday junction branch migration complex subunit RuvA (207 aa).

The segment at 1 to 65 (MYDYIRGILT…ETEHVLYGFS (65 aa)) is domain I. The segment at 66–144 (SRRERECFRM…DLLPLDSKAI (79 aa)) is domain II. The segment at 145–155 (ASWESVKPSCM) is flexible linker. The segment at 155–207 (MDEGIQALAALGYSKPSAERMIAEAMSELPENASLAEILPIALKKNLQGLNKS) is domain III.

Belongs to the RuvA family. Homotetramer. Forms an RuvA(8)-RuvB(12)-Holliday junction (HJ) complex. HJ DNA is sandwiched between 2 RuvA tetramers; dsDNA enters through RuvA and exits via RuvB. An RuvB hexamer assembles on each DNA strand where it exits the tetramer. Each RuvB hexamer is contacted by two RuvA subunits (via domain III) on 2 adjacent RuvB subunits; this complex drives branch migration. In the full resolvosome a probable DNA-RuvA(4)-RuvB(12)-RuvC(2) complex forms which resolves the HJ.

The protein resides in the cytoplasm. Functionally, the RuvA-RuvB-RuvC complex processes Holliday junction (HJ) DNA during genetic recombination and DNA repair, while the RuvA-RuvB complex plays an important role in the rescue of blocked DNA replication forks via replication fork reversal (RFR). RuvA specifically binds to HJ cruciform DNA, conferring on it an open structure. The RuvB hexamer acts as an ATP-dependent pump, pulling dsDNA into and through the RuvAB complex. HJ branch migration allows RuvC to scan DNA until it finds its consensus sequence, where it cleaves and resolves the cruciform DNA. The protein is Holliday junction branch migration complex subunit RuvA of Chlamydia caviae (strain ATCC VR-813 / DSM 19441 / 03DC25 / GPIC) (Chlamydophila caviae).